We begin with the raw amino-acid sequence, 387 residues long: Succinate--CoA ligase [ADP-forming] subunit beta (387 aa).

ATP is bound by residues Lys46, 53–55, Glu99, Ala102, and Glu107; that span reads GRG. Mg(2+)-binding residues include Asn199 and Asp213. Substrate is bound by residues Asn264 and 321-323; that span reads GIV.

The protein belongs to the succinate/malate CoA ligase beta subunit family. As to quaternary structure, heterotetramer of two alpha and two beta subunits. Requires Mg(2+) as cofactor.

The catalysed reaction is succinate + ATP + CoA = succinyl-CoA + ADP + phosphate. It catalyses the reaction GTP + succinate + CoA = succinyl-CoA + GDP + phosphate. It functions in the pathway carbohydrate metabolism; tricarboxylic acid cycle; succinate from succinyl-CoA (ligase route): step 1/1. In terms of biological role, succinyl-CoA synthetase functions in the citric acid cycle (TCA), coupling the hydrolysis of succinyl-CoA to the synthesis of either ATP or GTP and thus represents the only step of substrate-level phosphorylation in the TCA. The beta subunit provides nucleotide specificity of the enzyme and binds the substrate succinate, while the binding sites for coenzyme A and phosphate are found in the alpha subunit. In Campylobacter jejuni (strain RM1221), this protein is Succinate--CoA ligase [ADP-forming] subunit beta.